The chain runs to 366 residues: MSETHTSDETEARDQLLAIAEQFYDQFADGDIPRMSLPTRSKSNIEYDEDADVWVYGDSQSTRSANSVRGARKLLKSVYTVDFLAQQLDEGRSSTLRELYYLSESWDEAEAQFNDQSESDKLVEDLEIVSGVKREDFHMRPEESGAKVMGPLRLREQTRRGDREIHCQEDVGQGGYQIPNNPDTIDFLDTDADFVLCVETGGMRDRLVENGFDDDYNAIVVHLGGQPARATRRLTKRLHDELDLPVTVFTDGDPWSYRIYGSVAYGSIKSAHLSEYLATPQAQFIGIRPQDIVDYDLPTDPLSDSDVNALESELEDPRFQSDFWTEQIGLQLDIDKKAEQQALASRGLDFVTDTYLPERLAEMGVL.

Positions 7-146 (SDETEARDQL…FHMRPEESGA (140 aa)) constitute a Topo IIA-type catalytic domain. Tyr-101 acts as the O-(5'-phospho-DNA)-tyrosine intermediate in catalysis. Residues Glu-199 and Asp-251 each contribute to the Mg(2+) site.

Belongs to the TOP6A family. As to quaternary structure, homodimer. Heterotetramer of two Top6A and two Top6B chains. Mg(2+) is required as a cofactor.

The enzyme catalyses ATP-dependent breakage, passage and rejoining of double-stranded DNA.. Its function is as follows. Relaxes both positive and negative superturns and exhibits a strong decatenase activity. This chain is Type 2 DNA topoisomerase 6 subunit A, found in Halobacterium salinarum (strain ATCC 700922 / JCM 11081 / NRC-1) (Halobacterium halobium).